Reading from the N-terminus, the 81-residue chain is Large ribosomal subunit protein bL31 (81 aa).

It belongs to the bacterial ribosomal protein bL31 family. Type A subfamily. In terms of assembly, part of the 50S ribosomal subunit.

Functionally, binds the 23S rRNA. This is Large ribosomal subunit protein bL31 (rpmE) from Fusobacterium nucleatum subsp. nucleatum (strain ATCC 25586 / DSM 15643 / BCRC 10681 / CIP 101130 / JCM 8532 / KCTC 2640 / LMG 13131 / VPI 4355).